Consider the following 374-residue polypeptide: Chaperone protein DnaJ (374 aa).

The J domain occupies 5–70 (DFYEILGLGK…QKRDAYDRYG (66 aa)). Positions 28-47 (LAMKHHPDRNPDSKGAEDKF) are disordered. Positions 35-47 (DRNPDSKGAEDKF) are enriched in basic and acidic residues. A CR-type zinc finger spans residues 134–212 (GYDTTIRVPS…CSGAGKIKRN (79 aa)). The Zn(2+) site is built by cysteine 147, cysteine 150, cysteine 164, cysteine 167, cysteine 186, cysteine 189, cysteine 200, and cysteine 203. CXXCXGXG motif repeat units lie at residues 147-154 (CETCDGSG), 164-171 (CTTCGGHG), 186-193 (CPKCHGSG), and 200-207 (CTACSGAG).

The protein belongs to the DnaJ family. As to quaternary structure, homodimer. Zn(2+) serves as cofactor.

The protein resides in the cytoplasm. Participates actively in the response to hyperosmotic and heat shock by preventing the aggregation of stress-denatured proteins and by disaggregating proteins, also in an autonomous, DnaK-independent fashion. Unfolded proteins bind initially to DnaJ; upon interaction with the DnaJ-bound protein, DnaK hydrolyzes its bound ATP, resulting in the formation of a stable complex. GrpE releases ADP from DnaK; ATP binding to DnaK triggers the release of the substrate protein, thus completing the reaction cycle. Several rounds of ATP-dependent interactions between DnaJ, DnaK and GrpE are required for fully efficient folding. Also involved, together with DnaK and GrpE, in the DNA replication of plasmids through activation of initiation proteins. The chain is Chaperone protein DnaJ from Herminiimonas arsenicoxydans.